Consider the following 385-residue polypeptide: Methionine aminopeptidase 1 (385 aa).

The C6H2-type zinc-finger motif lies at 6 to 59 (TRVCETAGCSSEAKLQCPTCLKLGIQGSYFCSQECFKGSWATHKLLHKKAKDEK). The Zn(2+) site is built by Cys9, Cys14, Cys22, Cys25, Cys36, Cys40, His48, and His52. Position 203 (His203) interacts with a protein. 3 residues coordinate Zn(2+): Asp220, Asp231, and His294. His301 is an a protein binding site. Residues Glu327 and Glu358 each contribute to the Zn(2+) site.

The protein belongs to the peptidase M24A family. Methionine aminopeptidase type 1 subfamily. As to quaternary structure, associates with the 60S ribosomal subunit of the 80S translational complex. Zn(2+) serves as cofactor. It depends on Co(2+) as a cofactor. The cofactor is Mn(2+). Requires Fe(2+) as cofactor.

The protein localises to the cytoplasm. The enzyme catalyses Release of N-terminal amino acids, preferentially methionine, from peptides and arylamides.. Functionally, cotranslationally removes the N-terminal methionine from nascent proteins. The N-terminal methionine is often cleaved when the second residue in the primary sequence is small and uncharged (Met-Ala-, Cys, Gly, Pro, Ser, Thr, or Val). The chain is Methionine aminopeptidase 1 (METAP1) from Gallus gallus (Chicken).